Consider the following 78-residue polypeptide: UPF0335 protein A1E_00570 (78 aa).

Belongs to the UPF0335 family.

The protein is UPF0335 protein A1E_00570 of Rickettsia canadensis (strain McKiel).